The primary structure comprises 77 residues: Large ribosomal subunit protein uL24 (77 aa).

It belongs to the universal ribosomal protein uL24 family. In terms of assembly, part of the 50S ribosomal subunit.

One of two assembly initiator proteins, it binds directly to the 5'-end of the 23S rRNA, where it nucleates assembly of the 50S subunit. Functionally, one of the proteins that surrounds the polypeptide exit tunnel on the outside of the subunit. The protein is Large ribosomal subunit protein uL24 of Campylobacter jejuni subsp. jejuni serotype O:6 (strain 81116 / NCTC 11828).